The sequence spans 154 residues: Secreted RxLR effector protein PITG_21681 (154 aa).

Residues 1-20 (MRRYAALMVIDAVLLSTSQA) form the signal peptide. A disordered region spans residues 42–70 (SAERDGGIPNKRSLRRISVTESNDGERDE). A RxLR-dEER motif is present at residues 53-72 (RSLRRISVTESNDGERDEER).

Belongs to the RxLR effector family.

It is found in the secreted. The protein resides in the host cell. Secreted effector that is involved in host plant infection. Increases the susceptibility to P.infestans and reduces the plant growth. Affects the expression of host genes. This chain is Secreted RxLR effector protein PITG_21681, found in Phytophthora infestans (strain T30-4) (Potato late blight agent).